Consider the following 197-residue polypeptide: Shikimate kinase (197 aa).

14–19 (GSGKST) is an ATP binding site. S18 lines the Mg(2+) pocket. Residues D36, R60, and G82 each contribute to the substrate site. Residue R120 coordinates ATP. A substrate-binding site is contributed by R147.

Belongs to the shikimate kinase family. In terms of assembly, monomer. Requires Mg(2+) as cofactor.

Its subcellular location is the cytoplasm. It carries out the reaction shikimate + ATP = 3-phosphoshikimate + ADP + H(+). It participates in metabolic intermediate biosynthesis; chorismate biosynthesis; chorismate from D-erythrose 4-phosphate and phosphoenolpyruvate: step 5/7. Its function is as follows. Catalyzes the specific phosphorylation of the 3-hydroxyl group of shikimic acid using ATP as a cosubstrate. The sequence is that of Shikimate kinase from Prosthecochloris aestuarii (strain DSM 271 / SK 413).